The sequence spans 570 residues: Periplasmic trehalase (570 aa).

Positions 1–34 (MIPPEIRRSVLLQKAIKLALAGTLLTFASFSATA) are cleaved as a signal peptide. Substrate-binding positions include Arg159, 166–167 (WD), Asn203, 212–214 (RSQ), 284–286 (RPE), and Gly317. Active-site proton donor/acceptor residues include Asp319 and Glu503. Substrate is bound at residue Glu518. The segment at 544–570 (KPCDSVPSTRPASLSATPTKTPSAATQ) is disordered. Residues 554-570 (PASLSATPTKTPSAATQ) are compositionally biased toward low complexity.

The protein belongs to the glycosyl hydrolase 37 family. As to quaternary structure, monomer.

The protein localises to the periplasm. It catalyses the reaction alpha,alpha-trehalose + H2O = alpha-D-glucose + beta-D-glucose. Functionally, provides the cells with the ability to utilize trehalose at high osmolarity by splitting it into glucose molecules that can subsequently be taken up by the phosphotransferase-mediated uptake system. This Salmonella paratyphi B (strain ATCC BAA-1250 / SPB7) protein is Periplasmic trehalase.